The primary structure comprises 218 residues: Ropporin-1-like protein (218 aa).

The region spanning 17 to 54 (PALPNMLKQFTKAAIRTQPRDVLQWAADYFSALSKGQD) is the RIIa domain. A disordered region spans residues 199 to 218 (QSQGGMVQPSNFTSLHTAEK).

It belongs to the ropporin family. Component of axonemal radial spoke complexes.

Its subcellular location is the cell projection. It is found in the cilium. It localises to the flagellum. Functions as part of axonemal radial spoke complexes that play an important part in the motility of sperm and cilia. Important for male fertility. Involved in fibrous sheath integrity and sperm motility, plays a role in PKA-dependent signaling processes required for spermatozoa capacitation. The protein is Ropporin-1-like protein (ropn1l) of Danio rerio (Zebrafish).